The following is an 88-amino-acid chain: Large ribosomal subunit protein bL31B (88 aa).

The protein belongs to the bacterial ribosomal protein bL31 family. Type B subfamily. In terms of assembly, part of the 50S ribosomal subunit.

The protein is Large ribosomal subunit protein bL31B of Janthinobacterium sp. (strain Marseille) (Minibacterium massiliensis).